We begin with the raw amino-acid sequence, 220 residues long: Octanoyltransferase (220 aa).

Residues 27–208 (PGTADEIWLC…QLARAHGHAV (182 aa)) enclose the BPL/LPL catalytic domain. Substrate contacts are provided by residues 66–73 (RGGQVTYH), 139–141 (ALG), and 152–154 (GLA). Cysteine 170 serves as the catalytic Acyl-thioester intermediate.

It belongs to the LipB family.

It is found in the cytoplasm. The catalysed reaction is octanoyl-[ACP] + L-lysyl-[protein] = N(6)-octanoyl-L-lysyl-[protein] + holo-[ACP] + H(+). It functions in the pathway protein modification; protein lipoylation via endogenous pathway; protein N(6)-(lipoyl)lysine from octanoyl-[acyl-carrier-protein]: step 1/2. In terms of biological role, catalyzes the transfer of endogenously produced octanoic acid from octanoyl-acyl-carrier-protein onto the lipoyl domains of lipoate-dependent enzymes. Lipoyl-ACP can also act as a substrate although octanoyl-ACP is likely to be the physiological substrate. This Bordetella parapertussis (strain 12822 / ATCC BAA-587 / NCTC 13253) protein is Octanoyltransferase.